Here is a 110-residue protein sequence, read N- to C-terminus: MPPKAAGGKSKQIQASKAAAKGSSGGAGRKKWSKGRSREKLNNAILFDKETYAKLLKEMPTAKVITTAVVSERMKCNGSLARRAIKELLSKGLIKQIIKGHGNGVYTKAQ.

Positions 1 to 39 (MPPKAAGGKSKQIQASKAAAKGSSGGAGRKKWSKGRSRE) are disordered.

Belongs to the eukaryotic ribosomal protein eS25 family.

The polypeptide is Small ribosomal subunit protein eS25 (rps25) (Dictyostelium discoideum (Social amoeba)).